The chain runs to 106 residues: Small ribosomal subunit protein bS6 (106 aa).

This sequence belongs to the bacterial ribosomal protein bS6 family.

Its function is as follows. Binds together with bS18 to 16S ribosomal RNA. This Cyanothece sp. (strain PCC 7425 / ATCC 29141) protein is Small ribosomal subunit protein bS6.